The following is a 366-amino-acid chain: Phospho-N-acetylmuramoyl-pentapeptide-transferase (366 aa).

Transmembrane regions (helical) follow at residues 25–45 (AGAA…AIIN), 70–90 (GTPT…SLLW), 93–113 (LSNV…AIGF), 134–154 (LGIE…MALA), 174–194 (FVIN…VGAG), 205–225 (GLAI…AYLA), 245–265 (LAVI…FNAP), 268–288 (AIFM…SIAV), 297–317 (VIVG…VFWF), and 343–363 (QVVI…LATL).

This sequence belongs to the glycosyltransferase 4 family. MraY subfamily. Requires Mg(2+) as cofactor.

The protein resides in the cell inner membrane. It catalyses the reaction UDP-N-acetyl-alpha-D-muramoyl-L-alanyl-gamma-D-glutamyl-meso-2,6-diaminopimeloyl-D-alanyl-D-alanine + di-trans,octa-cis-undecaprenyl phosphate = di-trans,octa-cis-undecaprenyl diphospho-N-acetyl-alpha-D-muramoyl-L-alanyl-D-glutamyl-meso-2,6-diaminopimeloyl-D-alanyl-D-alanine + UMP. It participates in cell wall biogenesis; peptidoglycan biosynthesis. Functionally, catalyzes the initial step of the lipid cycle reactions in the biosynthesis of the cell wall peptidoglycan: transfers peptidoglycan precursor phospho-MurNAc-pentapeptide from UDP-MurNAc-pentapeptide onto the lipid carrier undecaprenyl phosphate, yielding undecaprenyl-pyrophosphoryl-MurNAc-pentapeptide, known as lipid I. This Agrobacterium fabrum (strain C58 / ATCC 33970) (Agrobacterium tumefaciens (strain C58)) protein is Phospho-N-acetylmuramoyl-pentapeptide-transferase.